Consider the following 432-residue polypeptide: MLDINLLRKDLEGVVARLETRKSPQPFLDVERFTALEAERKAIQTRTEELQARRNSLSKQIGQLKAKGEDTAAVMAEVGGIGDGLKASAERLEVIQSELNALLMALPNLPQAGVPVGADEHANVEVRRWGQPRALDFAPKDHVDLGAPLGLDFETGAKLSGARFSFLRGPVARLHRALAQFMLDVQTQEHGYTECYTPYIVNREVLEGTGQLPKFEADMFWVTRGGDDDEATTQYLISTSEISLTNSVREQVLAADQLPIKLTAHSPCFRSEAGSAGRDTRGMIRQHQFDKVEMVQITTAEQSDAALEAMVGHAEAVLQKLELPYRVITLCTGDMGFGAAKTYDLEVWLPAQNTYREISSCSNCEAFQARRMQTRYKTAQGKNELVHTLNGSGLAVGRALVAVLENGQNADGSITIPAALRPYLGGLERLVA.

An L-serine-binding site is contributed by 239–241; the sequence is TSE. 270-272 provides a ligand contact to ATP; the sequence is RSE. Residue Glu-293 participates in L-serine binding. An ATP-binding site is contributed by 357 to 360; the sequence is EISS. Position 392 (Ser-392) interacts with L-serine.

It belongs to the class-II aminoacyl-tRNA synthetase family. Type-1 seryl-tRNA synthetase subfamily. In terms of assembly, homodimer. The tRNA molecule binds across the dimer.

Its subcellular location is the cytoplasm. It carries out the reaction tRNA(Ser) + L-serine + ATP = L-seryl-tRNA(Ser) + AMP + diphosphate + H(+). The catalysed reaction is tRNA(Sec) + L-serine + ATP = L-seryl-tRNA(Sec) + AMP + diphosphate + H(+). The protein operates within aminoacyl-tRNA biosynthesis; selenocysteinyl-tRNA(Sec) biosynthesis; L-seryl-tRNA(Sec) from L-serine and tRNA(Sec): step 1/1. In terms of biological role, catalyzes the attachment of serine to tRNA(Ser). Is also able to aminoacylate tRNA(Sec) with serine, to form the misacylated tRNA L-seryl-tRNA(Sec), which will be further converted into selenocysteinyl-tRNA(Sec). The protein is Serine--tRNA ligase of Methylibium petroleiphilum (strain ATCC BAA-1232 / LMG 22953 / PM1).